Here is a 435-residue protein sequence, read N- to C-terminus: GTPase Der (435 aa).

EngA-type G domains lie at N3–G167 and P176–G351. Residues G9–S16, D56–Y60, N119–D122, G182–S189, D229–I233, and N294–D297 contribute to the GTP site. Positions K352 to K435 constitute a KH-like domain.

It belongs to the TRAFAC class TrmE-Era-EngA-EngB-Septin-like GTPase superfamily. EngA (Der) GTPase family. As to quaternary structure, associates with the 50S ribosomal subunit.

Its function is as follows. GTPase that plays an essential role in the late steps of ribosome biogenesis. The polypeptide is GTPase Der (Cytophaga hutchinsonii (strain ATCC 33406 / DSM 1761 / CIP 103989 / NBRC 15051 / NCIMB 9469 / D465)).